The primary structure comprises 151 residues: MKVVLLKDIPGIGKTGDMKEVKDGYARNFLIPRGLAKMATEGEIKRIRNEKILKEHKEDLTKKKSEEILKTLQKQIHKVPAKVGGGGKLFGALTSTNLSEILSKNSGVEIDKKWINMDKPLKETGLYDIEMRLPGGVRGTIKVEIVGEEKG.

Belongs to the bacterial ribosomal protein bL9 family.

Binds to the 23S rRNA. The sequence is that of Large ribosomal subunit protein bL9 from Pseudothermotoga lettingae (strain ATCC BAA-301 / DSM 14385 / NBRC 107922 / TMO) (Thermotoga lettingae).